A 571-amino-acid chain; its full sequence is Urease subunit alpha (571 aa).

The Urease domain maps to Gly-134–Phe-571. Residues His-139, His-141, and Lys-222 each contribute to the Ni(2+) site. An N6-carboxylysine modification is found at Lys-222. A substrate-binding site is contributed by His-224. 2 residues coordinate Ni(2+): His-251 and His-277. Catalysis depends on His-325, which acts as the Proton donor. Asp-365 is a Ni(2+) binding site.

It belongs to the metallo-dependent hydrolases superfamily. Urease alpha subunit family. Heterotrimer of UreA (gamma), UreB (beta) and UreC (alpha) subunits. Three heterotrimers associate to form the active enzyme. Requires Ni cation as cofactor. Post-translationally, carboxylation allows a single lysine to coordinate two nickel ions.

The protein localises to the cytoplasm. The enzyme catalyses urea + 2 H2O + H(+) = hydrogencarbonate + 2 NH4(+). It participates in nitrogen metabolism; urea degradation; CO(2) and NH(3) from urea (urease route): step 1/1. This Bordetella pertussis (strain Tohama I / ATCC BAA-589 / NCTC 13251) protein is Urease subunit alpha.